A 384-amino-acid polypeptide reads, in one-letter code: Protein Brevis radix-like 4 (384 aa).

2 disordered regions span residues 1-35 (MLTC…SQLK) and 50-78 (PCTA…SDFE). The BRX 1 domain occupies 150–205 (KEWVAQVEPGVLITFVSLPGGGNDLKRIRFSRDMFNKLQAQRWWADNYDKVMELYN). Disordered regions lie at residues 214–270 (FPLP…DHNS) and 304–325 (SIRS…SNAS). Positions 221–235 (RSEDENAKVEYHPED) are enriched in basic and acidic residues. The segment covering 260–270 (YSSSDSLDHNS) has biased composition (polar residues). Residues 309 to 318 (SSRDADRSEE) are compositionally biased toward basic and acidic residues. The BRX 2 domain maps to 329–384 (NEWVEQDEPGVYITIKVLPGGKRELRRVRFSRERFGEMHARLWWEENRARIHEQYL).

Belongs to the BRX family. Expressed in roots.

The protein localises to the nucleus. The protein is Protein Brevis radix-like 4 (BRXL4) of Arabidopsis thaliana (Mouse-ear cress).